Reading from the N-terminus, the 562-residue chain is Serine/threonine-protein kinase STN7, chloroplastic (562 aa).

Residues 1–45 (MATISPGGAYIGTPSPFLGKKLKPFSLTSPILSFKPTVKLNSSCR) constitute a chloroplast transit peptide. The Protein kinase domain occupies 134 to 452 (FVVGKKLGEG…AKAALAHPYF (319 aa)). Residues 140 to 148 (LGEGSFGVV) and K167 contribute to the ATP site. D279 serves as the catalytic Proton acceptor. S526 is modified (phosphoserine). Phosphothreonine is present on residues T537 and T541.

The protein belongs to the protein kinase superfamily. Ser/Thr protein kinase family. In terms of processing, phosphorylated.

It localises to the plastid. The protein localises to the chloroplast thylakoid membrane. It catalyses the reaction L-seryl-[protein] + ATP = O-phospho-L-seryl-[protein] + ADP + H(+). It carries out the reaction L-threonyl-[protein] + ATP = O-phospho-L-threonyl-[protein] + ADP + H(+). Its function is as follows. Serine/threonine protein kinase required for state transition by phosphorylating light-harvesting complex II outer antennae (LCHII). State transition plays a central role in response to environmental changes and allows to adjust to changing light conditions via the redistribution of light excitation energy between photosystem II (PSII) and photosystem I (PSI). Phosphorylates the minor light harvesting protein LHCB4.2/CP29 and is involved in the light-dependent phosphorylation of TSP9. Acts as a key component of the long-term response (LTR) signaling pathway. Mediates phosphorylation-dependent PTAC16 subcellular localization to regulate plastid gene expression. This chain is Serine/threonine-protein kinase STN7, chloroplastic (STN7), found in Arabidopsis thaliana (Mouse-ear cress).